A 397-amino-acid chain; its full sequence is MDSDPVSDYLKYENEPEYLDLEELPDSDEPVYILGKQYDTKTDKCDLQSDIVSRLWFTYRKKFSPIGGTGPSSDTGWGCMLRCGQMMLAQALVCQHLGRDWRWEKHKNHPEEYQQILQCFLDRKDCCYSIHQMAQMGVGEGKSIGEWFGPNTVAQVLKKLALFDEWNSLAVYVSMDNTVVVEDIKTMCKYQPQSCSMAQAASHQSTWSRCRDTSGHCSGWRPLLLVVPLRLGINHINPVYVDAFKACFKMPQSLGALGGKPNHAYYFIGFSGDEIIYLDPHTTQTFVDTEEAGTVQDQTYHCQKGPNSMKVLNLDPSVALGFFCKDENDFNNWCEVIEKEILKHQSLRMFELTPKHPPHWPPFIPPTKPEVTTTGAELIESTDKLFDVEEEFEILSV.

Cys-79 serves as the catalytic Nucleophile. Catalysis depends on residues Asp-279 and His-281. An LIR motif is present at residues 392–395 (FEIL).

The protein belongs to the peptidase C54 family.

It localises to the cytoplasm. The enzyme catalyses [protein]-C-terminal L-amino acid-glycyl-phosphatidylethanolamide + H2O = [protein]-C-terminal L-amino acid-glycine + a 1,2-diacyl-sn-glycero-3-phosphoethanolamine. Cysteine protease that plays a key role in autophagy by mediating both proteolytic activation and delipidation of ATG8 family proteins. The protease activity is required for proteolytic activation of ATG8 family proteins: cleaves the C-terminal amino acid of ATG8 proteins to reveal a C-terminal glycine. Exposure of the glycine at the C-terminus is essential for ATG8 proteins conjugation to phosphatidylethanolamine (PE) and insertion to membranes, which is necessary for autophagy. Protease activity is also required to counteract formation of high-molecular weight conjugates of ATG8 proteins (ATG8ylation): acts as a deubiquitinating-like enzyme that removes ATG8 conjugated to other proteins, such as ATG3. In addition to the protease activity, also mediates delipidation of ATG8 family proteins. Catalyzes delipidation of PE-conjugated forms of ATG8 proteins during macroautophagy. This Xenopus laevis (African clawed frog) protein is Cysteine protease ATG4A.